Consider the following 95-residue polypeptide: Aspartyl/glutamyl-tRNA(Asn/Gln) amidotransferase subunit C (95 aa).

This sequence belongs to the GatC family. As to quaternary structure, heterotrimer of A, B and C subunits.

The enzyme catalyses L-glutamyl-tRNA(Gln) + L-glutamine + ATP + H2O = L-glutaminyl-tRNA(Gln) + L-glutamate + ADP + phosphate + H(+). It carries out the reaction L-aspartyl-tRNA(Asn) + L-glutamine + ATP + H2O = L-asparaginyl-tRNA(Asn) + L-glutamate + ADP + phosphate + 2 H(+). Functionally, allows the formation of correctly charged Asn-tRNA(Asn) or Gln-tRNA(Gln) through the transamidation of misacylated Asp-tRNA(Asn) or Glu-tRNA(Gln) in organisms which lack either or both of asparaginyl-tRNA or glutaminyl-tRNA synthetases. The reaction takes place in the presence of glutamine and ATP through an activated phospho-Asp-tRNA(Asn) or phospho-Glu-tRNA(Gln). This Rhizobium etli (strain ATCC 51251 / DSM 11541 / JCM 21823 / NBRC 15573 / CFN 42) protein is Aspartyl/glutamyl-tRNA(Asn/Gln) amidotransferase subunit C.